The following is a 65-amino-acid chain: Ovary maturating parsin (65 aa).

Over residues 17–28 (PAAPAVAPAAPA) the composition is skewed to low complexity. A disordered region spans residues 17–36 (PAAPAVAPAAPASWPHQQRR).

In terms of assembly, monomer.

Functionally, neurohormone that anticipates ovarian maturation. Acts as a true gonadotropin and stimulates vitellogenin biosynthesis. This Locusta migratoria (Migratory locust) protein is Ovary maturating parsin.